Consider the following 131-residue polypeptide: Small ribosomal subunit protein uS8 (131 aa).

A disordered region spans residues 1–27 (MSMTDPVADMLTRIRNGQRASKNEVSM).

Belongs to the universal ribosomal protein uS8 family. In terms of assembly, part of the 30S ribosomal subunit. Contacts proteins S5 and S12.

Its function is as follows. One of the primary rRNA binding proteins, it binds directly to 16S rRNA central domain where it helps coordinate assembly of the platform of the 30S subunit. This is Small ribosomal subunit protein uS8 from Thioalkalivibrio sulfidiphilus (strain HL-EbGR7).